A 297-amino-acid chain; its full sequence is MDVVRTPDARFQNLVGYPFAAHYVDVAATDTPHLRMHYIDEGPADGPPIVLLHGEPTWSYLYRTMIPPLAAGGYRVLAPDLIGFGRSDKPTRIADYTYLRHVEWVKSWFEELRLAEATLFVQDWGSLIGLRVAAEHGDAIARLVVANGFLPTARGRTPTAFHIWRAFARYSPVLPAGRLVAAGTVRKVPPAVRAGYDAPFPDKSYQAGARAFPQLVPISPDDPAVAANRAAWDALGRWEKPFLAIFGERDPLLGRADRPLIKHIPGAAGQPHARINANHFIQEDSGPELAERIISWQ.

In terms of domain architecture, AB hydrolase-1 spans 47 to 148; sequence PPIVLLHGEP…AIARLVVANG (102 aa). Residue D123 is the Nucleophile of the active site. The active-site Proton donor is the D250. The active-site Proton acceptor is the H279.

This sequence belongs to the haloalkane dehalogenase family. Type 1 subfamily. Monomer.

It catalyses the reaction 1-haloalkane + H2O = a halide anion + a primary alcohol + H(+). Catalyzes hydrolytic cleavage of carbon-halogen bonds in halogenated aliphatic compounds, leading to the formation of the corresponding primary alcohols, halide ions and protons. This chain is Haloalkane dehalogenase, found in Mycobacterium marinum (strain ATCC BAA-535 / M).